The chain runs to 152 residues: uncharacterized protein (152 aa).

This is an uncharacterized protein from Homo sapiens (Human).